A 215-amino-acid chain; its full sequence is MCWGKHWPRPEGRNLACSKGSPGWRTAGQGSGSYGAATLGKGTEQRGVGALRRGLLSFTCFCLSNWTSGAGFSEMGRSRFEEGRLGYSSDVLSARPTMSPTEMLRSRALNLGAATVLRRHRAPQGTSSYQEGRRAHEATSAESDDDNGVQVLASLAVSCAQHSRHKDPVGTQLQQACAQVPTSRAPLWPCPSHRLMHSTDGPLDPEPLSTLLPAA.

The disordered stretch occupies residues 120–147 (HRAPQGTSSYQEGRRAHEATSAESDDDN).

This is an uncharacterized protein from Homo sapiens (Human).